A 290-amino-acid chain; its full sequence is 4-hydroxybenzoate octaprenyltransferase (290 aa).

Transmembrane regions (helical) follow at residues 23–43, 46–66, 99–119, 141–161, 163–183, 213–233, 234–254, and 268–288; these read IGAL…TPGV, LWIM…GCVV, LFVV…TMTI, LPQV…FAAV, ESVP…AVAY, LIIG…GELN, GLGW…VYQQ, and AFMN…MSYW.

This sequence belongs to the UbiA prenyltransferase family. The cofactor is Mg(2+).

It is found in the cell inner membrane. It catalyses the reaction all-trans-octaprenyl diphosphate + 4-hydroxybenzoate = 4-hydroxy-3-(all-trans-octaprenyl)benzoate + diphosphate. The protein operates within cofactor biosynthesis; ubiquinone biosynthesis. In terms of biological role, catalyzes the prenylation of para-hydroxybenzoate (PHB) with an all-trans polyprenyl group. Mediates the second step in the final reaction sequence of ubiquinone-8 (UQ-8) biosynthesis, which is the condensation of the polyisoprenoid side chain with PHB, generating the first membrane-bound Q intermediate 3-octaprenyl-4-hydroxybenzoate. This chain is 4-hydroxybenzoate octaprenyltransferase, found in Shigella flexneri.